The following is a 103-amino-acid chain: Large ribosomal subunit protein uL24 (103 aa).

This sequence belongs to the universal ribosomal protein uL24 family. In terms of assembly, part of the 50S ribosomal subunit.

In terms of biological role, one of two assembly initiator proteins, it binds directly to the 5'-end of the 23S rRNA, where it nucleates assembly of the 50S subunit. Its function is as follows. One of the proteins that surrounds the polypeptide exit tunnel on the outside of the subunit. This Corynebacterium urealyticum (strain ATCC 43042 / DSM 7109) protein is Large ribosomal subunit protein uL24.